Consider the following 138-residue polypeptide: Probable DNA-directed RNA polymerases I, II, and III subunit RPABC2 (138 aa).

2 stretches are compositionally biased toward acidic residues: residues M1–E27 and E35–N46. Residues M1–N46 are disordered.

This sequence belongs to the archaeal Rpo6/eukaryotic RPB6 RNA polymerase subunit family. In terms of assembly, component of the RNA polymerase I (Pol I), RNA polymerase II (Pol II) and RNA polymerase III (Pol III) complexes consisting of at least 13, 12 and 17 subunits, respectively.

The protein resides in the nucleus. In terms of biological role, DNA-dependent RNA polymerases catalyze the transcription of DNA into RNA using the four ribonucleoside triphosphates as substrates. Common component of RNA polymerases I, II and III which synthesize ribosomal RNA precursors, mRNA precursors and many functional non-coding RNAs, and small RNAs, such as 5S rRNA and tRNAs, respectively. Pol II is the central component of the basal RNA polymerase II transcription machinery. Pols are composed of mobile elements that move relative to each other. In Pol II, RPB6 is part of the clamp element and together with parts of RPB1 and RPB2 forms a pocket to which the RPB4-RPB7 subcomplex binds. The sequence is that of Probable DNA-directed RNA polymerases I, II, and III subunit RPABC2 from Caenorhabditis briggsae.